Consider the following 600-residue polypeptide: Copine-A (600 aa).

2 consecutive C2 domains span residues 1–111 (MNLK…TVCL) and 116–246 (KSGK…NVIN). The Ca(2+) site is built by Asp23, Asp29, Asp82, Asp84, Asp89, Asp151, Asp158, Asp215, Asp217, and Asp223. The 218-residue stretch at 286-503 (NLIVGIDCTA…ELAAEVLREI (218 aa)) folds into the VWFA domain. The span at 535–549 (YDNPTTTTTATSPST) shows a compositional bias: low complexity. Residues 535-583 (YDNPTTTTTATSPSTGIDLNKGSNVGLNLTKTESSPSPSGGAGIDLNKG) are disordered. Residues 555–572 (KGSNVGLNLTKTESSPSP) show a composition bias toward polar residues.

This sequence belongs to the copine family. Ca(2+) is required as a cofactor.

Its subcellular location is the cytoplasm. It localises to the membrane. In terms of biological role, required for cytokinesis, contractile vacuole function and development. This is Copine-A (cpnA) from Dictyostelium discoideum (Social amoeba).